We begin with the raw amino-acid sequence, 116 residues long: Somatostatin (116 aa).

The signal sequence occupies residues 1–24 (MLSCRLQCALAALSIVLALGGVTC). The propeptide occupies 25–88 (APSDPRLRQF…QDEMRLELQR (64 aa)). A43 is modified (alanine amide). Residues 62-99 (QTENDALEPEDLSQAAEQDEMRLELQRSANSNPAMAPR) form a disordered region. A disulfide bond links C105 and C116.

Belongs to the somatostatin family. C-terminal amidation of the neuronostatin peptide is required for its biological activity, including for the regulation of mean arterial pressure.

It is found in the secreted. Its function is as follows. Inhibits the secretion of pituitary hormones, including that of growth hormone/somatotropin (GH1), PRL, ACTH, luteinizing hormone (LH) and TSH. Also impairs ghrelin- and GnRH-stimulated secretion of GH1 and LH; the inhibition of ghrelin-stimulated secretion of GH1 can be further increased by neuronostatin. Functionally, may enhance low-glucose-induced glucagon release by pancreatic alpha cells. This effect may be mediated by binding to GPR107 and PKA activation. May regulate cardiac contractile function. May compromise cardiomyocyte viability. In the central nervous system, may impair memory retention and may affect hippocampal excitability. May also have anxiolytic and anorexigenic effects. May play a role in arterial pressure regulation. May inhibit basal, but not ghrelin- or GnRH-stimulated secretion of GH1 or LH, but does not affect the release of other pituitary hormones, including PRL, ACTH, FSH or TSH. Potentiates inhibitory action of somatostatin on ghrelin-stimulated secretion of GH1, but not that on GnRH-stimulated secretion of LH. The chain is Somatostatin (SST) from Canis lupus familiaris (Dog).